The primary structure comprises 134 residues: ATP synthase epsilon chain (134 aa).

The protein belongs to the ATPase epsilon chain family. As to quaternary structure, F-type ATPases have 2 components, CF(1) - the catalytic core - and CF(0) - the membrane proton channel. CF(1) has five subunits: alpha(3), beta(3), gamma(1), delta(1), epsilon(1). CF(0) has three main subunits: a, b and c.

It is found in the cell membrane. Functionally, produces ATP from ADP in the presence of a proton gradient across the membrane. The chain is ATP synthase epsilon chain from Listeria innocua serovar 6a (strain ATCC BAA-680 / CLIP 11262).